An 835-amino-acid chain; its full sequence is Protein translocase subunit SecA (835 aa).

Residues Q85, 103–107, and D492 contribute to the ATP site; that span reads GEGKT. Residues C819, C821, C830, and C831 each coordinate Zn(2+).

It belongs to the SecA family. Monomer and homodimer. Part of the essential Sec protein translocation apparatus which comprises SecA, SecYEG and auxiliary proteins SecDF. Other proteins may also be involved. Requires Zn(2+) as cofactor.

The protein resides in the cell membrane. It localises to the cytoplasm. It carries out the reaction ATP + H2O + cellular proteinSide 1 = ADP + phosphate + cellular proteinSide 2.. Its function is as follows. Part of the Sec protein translocase complex. Interacts with the SecYEG preprotein conducting channel. Has a central role in coupling the hydrolysis of ATP to the transfer of proteins into and across the cell membrane, serving as an ATP-driven molecular motor driving the stepwise translocation of polypeptide chains across the membrane. The sequence is that of Protein translocase subunit SecA from Clostridium botulinum (strain Okra / Type B1).